A 612-amino-acid polypeptide reads, in one-letter code: Sulfite reductase [NADPH] hemoprotein beta-component (612 aa).

Residues 1–32 form a disordered region; it reads MDDHKPIDTPDGPAVDTPGIGAHRYEAPPTDR. Residues Cys-469, Cys-475, Cys-514, and Cys-518 each contribute to the [4Fe-4S] cluster site. Cys-518 provides a ligand contact to siroheme.

Belongs to the nitrite and sulfite reductase 4Fe-4S domain family. As to quaternary structure, alpha(8)-beta(8). The alpha component is a flavoprotein, the beta component is a hemoprotein. It depends on siroheme as a cofactor. [4Fe-4S] cluster serves as cofactor.

It carries out the reaction hydrogen sulfide + 3 NADP(+) + 3 H2O = sulfite + 3 NADPH + 4 H(+). The protein operates within sulfur metabolism; hydrogen sulfide biosynthesis; hydrogen sulfide from sulfite (NADPH route): step 1/1. In terms of biological role, component of the sulfite reductase complex that catalyzes the 6-electron reduction of sulfite to sulfide. This is one of several activities required for the biosynthesis of L-cysteine from sulfate. The protein is Sulfite reductase [NADPH] hemoprotein beta-component of Methylorubrum populi (strain ATCC BAA-705 / NCIMB 13946 / BJ001) (Methylobacterium populi).